The sequence spans 188 residues: Threonylcarbamoyl-AMP synthase (188 aa).

The YrdC-like domain occupies glutamine 3–glutamine 188.

Belongs to the SUA5 family. TsaC subfamily.

The protein localises to the cytoplasm. The catalysed reaction is L-threonine + hydrogencarbonate + ATP = L-threonylcarbamoyladenylate + diphosphate + H2O. Functionally, required for the formation of a threonylcarbamoyl group on adenosine at position 37 (t(6)A37) in tRNAs that read codons beginning with adenine. Catalyzes the conversion of L-threonine, HCO(3)(-)/CO(2) and ATP to give threonylcarbamoyl-AMP (TC-AMP) as the acyladenylate intermediate, with the release of diphosphate. The chain is Threonylcarbamoyl-AMP synthase from Shewanella baltica (strain OS195).